The following is a 502-amino-acid chain: Probable malate:quinone oxidoreductase (502 aa).

This sequence belongs to the MQO family. FAD is required as a cofactor.

It carries out the reaction (S)-malate + a quinone = a quinol + oxaloacetate. It functions in the pathway carbohydrate metabolism; tricarboxylic acid cycle; oxaloacetate from (S)-malate (quinone route): step 1/1. The chain is Probable malate:quinone oxidoreductase from Synechococcus sp. (strain CC9902).